Reading from the N-terminus, the 285-residue chain is TATA box-binding protein-associated factor RNA polymerase I subunit D (285 aa).

Disordered regions lie at residues 1 to 49 and 85 to 112; these read MAQS…RIPT and KKKR…TRNI. Positions 21-39 are enriched in polar residues; sequence GNQSDDSSNSSLFKTQCVP. Phosphoserine is present on Ser-24. The segment covering 85-104 has biased composition (basic residues); that stretch reads KKKRKKRKKRKYKPKLRRQG. Phosphoserine is present on Ser-134. The interval 193–219 is disordered; sequence HKYMDDDGPLSPIEEPSTEDEATDPQS. Position 229 is a phosphoserine (Ser-229). Composition is skewed to basic and acidic residues over residues 242-264 and 273-285; these read NLEQ…KDAT and KGGE…SEVS. The tract at residues 242–285 is disordered; the sequence is NLEQGKIKKESAFSKKSKAKDATQRGNRRSWKGGEHACLHSEVS.

In terms of assembly, component of the transcription factor SL1/TIF-IB complex, composed of TBP and at least TAF1A, TAF1B, TAF1C and TAF1D. Interacts with UBTF.

The protein resides in the nucleus. In terms of biological role, component of the transcription factor SL1/TIF-IB complex, which is involved in the assembly of the PIC (preinitiation complex) during RNA polymerase I-dependent transcription. The rate of PIC formation probably is primarily dependent on the rate of association of SL1/TIF-IB with the rDNA promoter. SL1/TIF-IB is involved in stabilization of nucleolar transcription factor 1/UBTF on rDNA. Formation of SL1/TIF-IB excludes the association of TBP with TFIID subunits. The polypeptide is TATA box-binding protein-associated factor RNA polymerase I subunit D (Taf1d) (Rattus norvegicus (Rat)).